The following is a 102-amino-acid chain: Small ribosomal subunit protein uS10 (102 aa).

Belongs to the universal ribosomal protein uS10 family. As to quaternary structure, part of the 30S ribosomal subunit.

In terms of biological role, involved in the binding of tRNA to the ribosomes. In Desulfitobacterium hafniense (strain DSM 10664 / DCB-2), this protein is Small ribosomal subunit protein uS10.